The following is a 371-amino-acid chain: Cytochrome b (371 aa).

Helical transmembrane passes span 25 to 45 (FGSMLLTCLMLQVLTGFFLAI), 69 to 90 (WIMQNTHAIGASLFFICIYIHI), 105 to 125 (WLSGVTLLMTLMATAFFGYVL), and 170 to 190 (FCALHFILPFIIISLSSIHII). 2 residues coordinate heme b: His-75 and His-89. Residues His-174 and His-188 each contribute to the heme b site. Residue His-193 coordinates a ubiquinone. The next 4 membrane-spanning stretches (helical) occupy residues 218–238 (YKDFMTTTSMIILLPISLSVS), 280–300 (LGGTLALLMSILILTLPPFTH), 312–332 (LSQTLFWTLIATFVMITWTAT), and 339–358 (FITISQLTSIFYFSFFIMNP).

It belongs to the cytochrome b family. In terms of assembly, the cytochrome bc1 complex contains 3 respiratory subunits (MT-CYB, CYC1 and UQCRFS1), 2 core proteins (UQCRC1 and UQCRC2) and probably 6 low-molecular weight proteins. Heme b is required as a cofactor.

The protein localises to the mitochondrion inner membrane. Component of the ubiquinol-cytochrome c reductase complex (complex III or cytochrome b-c1 complex) that is part of the mitochondrial respiratory chain. The b-c1 complex mediates electron transfer from ubiquinol to cytochrome c. Contributes to the generation of a proton gradient across the mitochondrial membrane that is then used for ATP synthesis. The polypeptide is Cytochrome b (MT-CYB) (Micrurus tener microgalbineus (Spotted coral snake)).